The following is a 213-amino-acid chain: Cytochrome c biogenesis ATP-binding export protein CcmA (213 aa).

The ABC transporter domain maps to 3 to 211 (LTAENLGVRR…QMTGFAGVET (209 aa)). Residue 35–42 (GRNGSGKS) participates in ATP binding.

The protein belongs to the ABC transporter superfamily. CcmA exporter (TC 3.A.1.107) family. In terms of assembly, the complex is composed of two ATP-binding proteins (CcmA) and two transmembrane proteins (CcmB).

It localises to the cell inner membrane. The catalysed reaction is heme b(in) + ATP + H2O = heme b(out) + ADP + phosphate + H(+). In terms of biological role, part of the ABC transporter complex CcmAB involved in the biogenesis of c-type cytochromes; once thought to export heme, this seems not to be the case, but its exact role is uncertain. Responsible for energy coupling to the transport system. The sequence is that of Cytochrome c biogenesis ATP-binding export protein CcmA from Agrobacterium fabrum (strain C58 / ATCC 33970) (Agrobacterium tumefaciens (strain C58)).